The primary structure comprises 306 residues: Aspartate carbamoyltransferase catalytic subunit (306 aa).

2 residues coordinate carbamoyl phosphate: R53 and T54. K82 contacts L-aspartate. Carbamoyl phosphate-binding residues include R103, H131, and Q134. Positions 164 and 226 each coordinate L-aspartate. Carbamoyl phosphate contacts are provided by L263 and P264.

This sequence belongs to the aspartate/ornithine carbamoyltransferase superfamily. ATCase family. As to quaternary structure, heterododecamer (2C3:3R2) of six catalytic PyrB chains organized as two trimers (C3), and six regulatory PyrI chains organized as three dimers (R2).

The enzyme catalyses carbamoyl phosphate + L-aspartate = N-carbamoyl-L-aspartate + phosphate + H(+). Its pathway is pyrimidine metabolism; UMP biosynthesis via de novo pathway; (S)-dihydroorotate from bicarbonate: step 2/3. In terms of biological role, catalyzes the condensation of carbamoyl phosphate and aspartate to form carbamoyl aspartate and inorganic phosphate, the committed step in the de novo pyrimidine nucleotide biosynthesis pathway. The protein is Aspartate carbamoyltransferase catalytic subunit of Methanocaldococcus jannaschii (strain ATCC 43067 / DSM 2661 / JAL-1 / JCM 10045 / NBRC 100440) (Methanococcus jannaschii).